The following is a 452-amino-acid chain: Phosphoglucosamine mutase (452 aa).

Residue serine 104 is the Phosphoserine intermediate of the active site. Mg(2+) contacts are provided by serine 104, aspartate 241, aspartate 243, and aspartate 245. Serine 104 carries the post-translational modification Phosphoserine.

The protein belongs to the phosphohexose mutase family. It depends on Mg(2+) as a cofactor. Post-translationally, activated by phosphorylation.

The enzyme catalyses alpha-D-glucosamine 1-phosphate = D-glucosamine 6-phosphate. Catalyzes the conversion of glucosamine-6-phosphate to glucosamine-1-phosphate. This chain is Phosphoglucosamine mutase, found in Arthrobacter sp. (strain FB24).